The chain runs to 435 residues: Glutamyl-tRNA reductase (435 aa).

Substrate-binding positions include 49-52 (TCNR), Ser-109, 114-116 (EGQ), and Gln-120. Residue Cys-50 is the Nucleophile of the active site. 198 to 203 (GAGRMS) provides a ligand contact to NADP(+).

It belongs to the glutamyl-tRNA reductase family. In terms of assembly, homodimer.

It carries out the reaction (S)-4-amino-5-oxopentanoate + tRNA(Glu) + NADP(+) = L-glutamyl-tRNA(Glu) + NADPH + H(+). It functions in the pathway porphyrin-containing compound metabolism; protoporphyrin-IX biosynthesis; 5-aminolevulinate from L-glutamyl-tRNA(Glu): step 1/2. Its pathway is porphyrin-containing compound metabolism; chlorophyll biosynthesis. Catalyzes the NADPH-dependent reduction of glutamyl-tRNA(Glu) to glutamate 1-semialdehyde (GSA). The polypeptide is Glutamyl-tRNA reductase (Prochlorococcus marinus (strain MIT 9211)).